The chain runs to 506 residues: Galactose/methyl galactoside import ATP-binding protein MglA (506 aa).

2 ABC transporter domains span residues 14-249 (LTMT…VGRE) and 260-506 (VPKE…AKYL). An ATP-binding site is contributed by 46 to 53 (GENGAGKS).

The protein belongs to the ABC transporter superfamily. Galactose/methyl galactoside importer (TC 3.A.1.2.3) family. The complex is composed of one ATP-binding protein (MglA), two transmembrane proteins (MglC) and a solute-binding protein (MglB).

The protein localises to the cell inner membrane. The catalysed reaction is D-galactose(out) + ATP + H2O = D-galactose(in) + ADP + phosphate + H(+). It carries out the reaction methyl beta-D-galactoside(out) + ATP + H2O = methyl beta-D-galactoside(in) + ADP + phosphate + H(+). Part of the ABC transporter complex MglABC involved in galactose/methyl galactoside import. Responsible for energy coupling to the transport system. The protein is Galactose/methyl galactoside import ATP-binding protein MglA of Haemophilus influenzae (strain 86-028NP).